The chain runs to 173 residues: Large ribosomal subunit protein uL10 (173 aa).

The protein belongs to the universal ribosomal protein uL10 family. Part of the ribosomal stalk of the 50S ribosomal subunit. The N-terminus interacts with L11 and the large rRNA to form the base of the stalk. The C-terminus forms an elongated spine to which L12 dimers bind in a sequential fashion forming a multimeric L10(L12)X complex.

Forms part of the ribosomal stalk, playing a central role in the interaction of the ribosome with GTP-bound translation factors. In Cupriavidus necator (strain ATCC 17699 / DSM 428 / KCTC 22496 / NCIMB 10442 / H16 / Stanier 337) (Ralstonia eutropha), this protein is Large ribosomal subunit protein uL10.